The primary structure comprises 152 residues: Putative pre-16S rRNA nuclease (152 aa).

It belongs to the YqgF nuclease family.

The protein localises to the cytoplasm. Its function is as follows. Could be a nuclease involved in processing of the 5'-end of pre-16S rRNA. The protein is Putative pre-16S rRNA nuclease of Sphingopyxis alaskensis (strain DSM 13593 / LMG 18877 / RB2256) (Sphingomonas alaskensis).